Here is a 154-residue protein sequence, read N- to C-terminus: tRNA (cytidine(34)-2'-O)-methyltransferase (154 aa).

4 residues coordinate S-adenosyl-L-methionine: L78, G100, I122, and S130.

This sequence belongs to the class IV-like SAM-binding methyltransferase superfamily. RNA methyltransferase TrmH family. TrmL subfamily. In terms of assembly, homodimer.

Its subcellular location is the cytoplasm. It catalyses the reaction cytidine(34) in tRNA + S-adenosyl-L-methionine = 2'-O-methylcytidine(34) in tRNA + S-adenosyl-L-homocysteine + H(+). The catalysed reaction is 5-carboxymethylaminomethyluridine(34) in tRNA(Leu) + S-adenosyl-L-methionine = 5-carboxymethylaminomethyl-2'-O-methyluridine(34) in tRNA(Leu) + S-adenosyl-L-homocysteine + H(+). Its function is as follows. Methylates the ribose at the nucleotide 34 wobble position in the two leucyl isoacceptors tRNA(Leu)(CmAA) and tRNA(Leu)(cmnm5UmAA). Catalyzes the methyl transfer from S-adenosyl-L-methionine to the 2'-OH of the wobble nucleotide. In Saccharophagus degradans (strain 2-40 / ATCC 43961 / DSM 17024), this protein is tRNA (cytidine(34)-2'-O)-methyltransferase.